Consider the following 397-residue polypeptide: S-adenosylmethionine synthase (397 aa).

His-17 lines the ATP pocket. Asp-19 contributes to the Mg(2+) binding site. Glu-45 is a binding site for K(+). 2 residues coordinate L-methionine: Glu-58 and Gln-101. The interval 101–111 is flexible loop; sequence QSPDIAQGVDK. Residues 176-178, 243-244, Asp-252, 258-259, and Lys-279 contribute to the ATP site; these read DGK, RF, and RK. Asp-252 contacts L-methionine. Lys-283 contributes to the L-methionine binding site.

It belongs to the AdoMet synthase family. As to quaternary structure, homotetramer; dimer of dimers. Requires Mg(2+) as cofactor. K(+) serves as cofactor.

The protein localises to the cytoplasm. It catalyses the reaction L-methionine + ATP + H2O = S-adenosyl-L-methionine + phosphate + diphosphate. The protein operates within amino-acid biosynthesis; S-adenosyl-L-methionine biosynthesis; S-adenosyl-L-methionine from L-methionine: step 1/1. Functionally, catalyzes the formation of S-adenosylmethionine (AdoMet) from methionine and ATP. The overall synthetic reaction is composed of two sequential steps, AdoMet formation and the subsequent tripolyphosphate hydrolysis which occurs prior to release of AdoMet from the enzyme. The polypeptide is S-adenosylmethionine synthase (Staphylococcus aureus (strain USA300)).